The following is a 334-amino-acid chain: MTIIVTGAAGFIGSNIVKALNQRGITDIVAVDNLSKGEKFKNLAECEIAHYLDKHEFIRQVREHILPYQNIEAVFHQGACSDTMNHDGLYMMDNNYQYTLDLLDWCQDERIPFLYASSAAVYGKGEIFREERELEKPLNVYGYSKFLFDQVLRRRMKEGLTAQVVGFRYFNVYGQHEQHKGRMASVAFHHFHQYREHGYVNLFGSNDGYGNGEQTRDFVSVEDVAKVNLYFFDHPELSGIYNLGTGRSQQFNELAAATVNACRAAEGKPEMSLKELVEEELIRYIPFPDALKGKYQSFTQADITKLREAGYKEEFFDVKSGVDRYVKWMLENLA.

Residues 11 to 12 (FI), 32 to 33 (DN), Lys-39, Lys-54, 77 to 81 (QGACS), and Asn-94 each bind NADP(+). The active-site Proton acceptor is the Tyr-141. Lys-145 is an NADP(+) binding site. Asn-171 contributes to the substrate binding site. NADP(+) contacts are provided by Val-172 and Lys-180. The Proton acceptor role is filled by Lys-180. Residues Arg-182, His-189, 203-206 (FGSN), Arg-216, and Tyr-295 contribute to the substrate site.

This sequence belongs to the NAD(P)-dependent epimerase/dehydratase family. HldD subfamily. As to quaternary structure, homopentamer. It depends on NADP(+) as a cofactor.

The enzyme catalyses ADP-D-glycero-beta-D-manno-heptose = ADP-L-glycero-beta-D-manno-heptose. The protein operates within nucleotide-sugar biosynthesis; ADP-L-glycero-beta-D-manno-heptose biosynthesis; ADP-L-glycero-beta-D-manno-heptose from D-glycero-beta-D-manno-heptose 7-phosphate: step 4/4. It participates in bacterial outer membrane biogenesis; LOS core biosynthesis. Its function is as follows. Catalyzes the interconversion between ADP-D-glycero-beta-D-manno-heptose and ADP-L-glycero-beta-D-manno-heptose via an epimerization at carbon 6 of the heptose. The sequence is that of ADP-L-glycero-D-manno-heptose-6-epimerase from Neisseria meningitidis serogroup B (strain ATCC BAA-335 / MC58).